Reading from the N-terminus, the 199-residue chain is NAD(P)H dehydrogenase (quinone) (199 aa).

The region spanning Val-4–Val-190 is the Flavodoxin-like domain. Residues Ser-10–Val-15 and Thr-78–Tyr-80 contribute to the FMN site. Trp-12 contributes to the NAD(+) binding site. Residue Trp-98 participates in substrate binding. Residues Ser-113–Gly-119 and His-134 each bind FMN.

Belongs to the WrbA family. Requires FMN as cofactor.

It catalyses the reaction a quinone + NADH + H(+) = a quinol + NAD(+). It carries out the reaction a quinone + NADPH + H(+) = a quinol + NADP(+). This Methylorubrum extorquens (strain CM4 / NCIMB 13688) (Methylobacterium extorquens) protein is NAD(P)H dehydrogenase (quinone).